Here is a 382-residue protein sequence, read N- to C-terminus: Mannitol-1-phosphate 5-dehydrogenase (382 aa).

Residue 3 to 14 (ALHFGAGNIGRG) coordinates NAD(+). N6-acetyllysine is present on Lys-269.

Belongs to the mannitol dehydrogenase family.

It catalyses the reaction D-mannitol 1-phosphate + NAD(+) = beta-D-fructose 6-phosphate + NADH + H(+). This is Mannitol-1-phosphate 5-dehydrogenase from Escherichia coli O7:K1 (strain IAI39 / ExPEC).